Here is a 355-residue protein sequence, read N- to C-terminus: Probable zinc transporter 12 (355 aa).

The signal sequence occupies residues 1-25; it reads MSRFRKTLVSAFVLCLVIFPLLVSA. Over 26–50 the chain is Extracellular; that stretch reads AEEENQCGGSKGGSAAEKASALKYK. A helical membrane pass occupies residues 51 to 71; sequence IIAFFSILIAGVFGVCLPIFG. Residues 72-77 are Cytoplasmic-facing; it reads LKTESN. A helical membrane pass occupies residues 78 to 98; sequence FFMYVKAFAAGVILATGFVHI. At 99–116 the chain is on the extracellular side; it reads LPDATESLTSSCLGEEPP. A helical transmembrane segment spans residues 117 to 137; sequence WGDFPMTGLVAMAASILTMLI. At 138-200 the chain is on the cytoplasmic side; sequence ESFASGYLNR…DDDHIDMRKK (63 aa). Positions 156-183 are disordered; it reads TLPVSTGGEEEHAHTGSAHTHASQGHSH. A helical transmembrane segment spans residues 201–221; sequence IVTQILELGIVVHSVIIGISL. Residues 222–231 lie on the Extracellular side of the membrane; that stretch reads GASPSVSTIK. Residues 232 to 252 traverse the membrane as a helical segment; that stretch reads PLIAAITFHQLFEGFGLGGCI. The Cytoplasmic portion of the chain corresponds to 253–261; it reads SEAKFRVKK. The chain crosses the membrane as a helical span at residues 262-282; sequence IWVMLMFFALTAPIGIGIGIG. Over 283-302 the chain is Extracellular; sequence VAEIYNENSPMALKVSGFLN. The chain crosses the membrane as a helical span at residues 303-323; sequence ATASGILIYMALVDLVAPLFM. Residues 324–334 lie on the Cytoplasmic side of the membrane; it reads NQKTQSSMKIQ. Residues 335–355 traverse the membrane as a helical segment; it reads VACSVSLVVGAGLMSLLAIWA.

The protein belongs to the ZIP transporter (TC 2.A.5) family.

The protein resides in the cell membrane. Zinc transporter involved in zinc uptake in roots. Targeted by BZIP23 transcription factor in response to zinc-deficient conditions. The chain is Probable zinc transporter 12 (ZIP12) from Arabidopsis thaliana (Mouse-ear cress).